A 520-amino-acid chain; its full sequence is MLKSASQNFFRAYSSRIGRYAATASGKLAQSRLSNIPTPKALKKFLDEYIVGQEIGKKVLSVAVYNHYLRINDKQKKGELQRQRELMEREKIADDRDEPIFSGNSESKAGWRNLQRQFNLAGREVDEDLELSKSNVLVVGPSGSGKTLLATTLAKILNVPIAITDCTQLTQAGYIGEDVEVCIERLLVNAEFDVARAEKGIIVLDEIDKLAKPAASIGTKDVSGEGVQQSLLKIIEGHKVEITVKRPVKHDIDGQKNQTTTKKDEVFVVDTSNILFMIMGAFVGLDKHIVKRIEDMKKIQKAGESVESSNSKEVEKERAKKFRFSNTLEQVELDNGKKVCALDLTTPTDLVSFGLIPELIGRVPIITALQPLQRDDLFHILKEPKNALLDQYEYIFKQFGVRLCVTQKALKKVAQFALKEGTGARGLRGIMERLLLNVNYDCPGSNIAYVLIDEATVDSLQETEHSLASQVDVKYYSGDEKDSLIRDVSEEDKKLGVMLEKELGHSANIHTPTIPKRSLT.

The N-terminal 13 residues, 1–13, are a transit peptide targeting the mitochondrion; it reads MLKSASQNFFRAY. 140–147 contacts ATP; sequence GPSGSGKT.

This sequence belongs to the ClpX chaperone family. As to quaternary structure, homohexamer that forms a ring structure; this hexamerization requires ATP binding. Interacts with HEM1.

The protein resides in the mitochondrion inner membrane. In terms of biological role, ATP-dependent unfoldase that stimulates the incorporation of the pyridoxal phosphate cofactor into 5-aminolevulinate synthase (HEM1), thereby activating 5-aminolevulinate (ALA) synthesis, the first step in heme biosynthesis. Up-regulates heme biosynthesis. The sequence is that of ATP-dependent clpX-like chaperone, mitochondrial from Saccharomyces cerevisiae (strain ATCC 204508 / S288c) (Baker's yeast).